The sequence spans 308 residues: Pycsar effector protein PaPycTIR (308 aa).

Position 54–143 (54–143 (LITEDAEDSE…RQVTRQLVDR (90 aa))) interacts with a nucleoside 3',5'-cyclic phosphate. Residues 160 to 278 (VFIICSVEAL…DLKGLTTIGY (119 aa)) are TIR-like.

It is found in the cytoplasm. The catalysed reaction is NAD(+) + H2O = ADP-D-ribose + nicotinamide + H(+). Pycsar (pyrimidine cyclase system for antiphage resistance) provides immunity against bacteriophage. The pyrimidine cyclase (PycC) synthesizes cyclic nucleotides in response to infection; these serve as specific second messenger signals. The signals activate the adjacent effector, leading to bacterial cell death and abortive phage infection. A clade A Pycsar system. Its function is as follows. The effector gene of a two-gene Pycsar system. Expression of this and adjacent uridylate cyclase PaPycC (AC P0DV40) probably confers resistance to bacteriophage. The genes are probably only expressed in response to bacteriophage infection. Probably only responds to cUMP (produced by its cognate NTP cyclase), acts by depleting cellular NAD(+) levels. The protein is Pycsar effector protein PaPycTIR of Pseudomonas aeruginosa.